The chain runs to 434 residues: L-2-hydroxyglutarate dehydrogenase, mitochondrial (434 aa).

Belongs to the L2HGDH family. FAD is required as a cofactor.

The protein resides in the mitochondrion. The catalysed reaction is (S)-2-hydroxyglutarate + A = 2-oxoglutarate + AH2. This is L-2-hydroxyglutarate dehydrogenase, mitochondrial from Caenorhabditis briggsae.